The chain runs to 329 residues: Beta-tectorin (329 aa).

Positions 1–17 (MVVRAFVLLALFAEASA) are cleaved as a signal peptide. The ZP domain maps to 19-283 (SCTPNKADVI…LSCPVNCDKR (265 aa)). 4 N-linked (GlcNAc...) asparagine glycosylation sites follow: Asn-80, Asn-104, Asn-116, and Asn-145. A disulfide bridge connects residues Cys-204 and Cys-264. Ala-305 carries GPI-anchor amidated alanine lipidation. The propeptide at 306–329 (FSGLCDFSDVLLHLILMLGTWAVL) is removed in mature form.

May form homomeric filament after self-association or heteromeric filament after association with alpha-tectorin. Interacts with CEACAM16. Post-translationally, the presence of a hydrophobic C-terminus preceded by a potential cleavage site strongly suggests that tectorins are synthesized as glycosylphosphatidylinositol-linked, membrane-bound precursors. Tectorins are targeted to the apical surface of the inner ear epithelia by the lipid and proteolytically released into the extracellular compartment.

It is found in the cell membrane. It localises to the secreted. The protein localises to the extracellular space. Its subcellular location is the extracellular matrix. In terms of biological role, one of the major non-collagenous components of the tectorial membrane. The tectorial membrane is an extracellular matrix of the inner ear that covers the neuroepithelium of the cochlea and contacts the stereocilia bundles of specialized sensory hair cells. Sound induces movement of these hair cells relative to the tectorial membrane, deflects the stereocilia and leads to fluctuations in hair-cell membrane potential, transducing sound into electrical signals. The chain is Beta-tectorin (Tectb) from Mus musculus (Mouse).